The primary structure comprises 489 residues: L-asparagine permease (489 aa).

Transmembrane regions (helical) follow at residues 38-58 (HVNM…GAGG), 62-82 (DAGP…FFVV), 113-133 (VAGW…ITAI), 150-170 (VLAL…VKIF), 175-195 (FWFA…GIFL), 223-243 (VMPV…LELV), 268-288 (VALF…SSLY), 302-322 (IGVP…AMSS), 357-377 (YGGI…NYLV), 382-402 (FEIV…IIMI), 426-446 (SPVT…LMWN), and 452-472 (RKTV…WFGV).

Belongs to the amino acid-polyamine-organocation (APC) superfamily. Amino acid transporter (AAT) (TC 2.A.3.1) family.

Its subcellular location is the cell membrane. This chain is L-asparagine permease (ansP), found in Streptomyces coelicolor (strain ATCC BAA-471 / A3(2) / M145).